The primary structure comprises 214 residues: Peptide methionine sulfoxide reductase B1, chloroplastic (214 aa).

A chloroplast-targeting transit peptide spans 1-53 (MAMRQYAAATAASSSFRARPRARPSCLPAAALPLAPCCGVAWSRASYRRASVR). Low complexity predominate over residues 58–81 (ASSSSSSSSSSPSPQGQAQAQAQG). The disordered stretch occupies residues 58-91 (ASSSSSSSSSSPSPQGQAQAQAQGKPNYSTSLTD). The region spanning 91–213 (DEEWRKRLTK…NSASLKLKKT (123 aa)) is the MsrB domain. Positions 130, 133, 179, and 182 each coordinate Zn(2+). Cys202 serves as the catalytic Nucleophile.

Belongs to the MsrB Met sulfoxide reductase family. Zn(2+) serves as cofactor. Expressed in leaves and flowers.

It localises to the plastid. It is found in the chloroplast. The catalysed reaction is L-methionyl-[protein] + [thioredoxin]-disulfide + H2O = L-methionyl-(R)-S-oxide-[protein] + [thioredoxin]-dithiol. Functionally, catalyzes the reduction of methionine sulfoxide (MetSO) to methionine in proteins. Involved in abiotic stress response. Plays a protective role against oxidative stress by restoring activity to proteins that have been inactivated by methionine oxidation. MSRB family specifically reduces the MetSO R-enantiomer. The chain is Peptide methionine sulfoxide reductase B1, chloroplastic from Oryza sativa subsp. japonica (Rice).